The primary structure comprises 183 residues: Probable RNA 2'-phosphotransferase (183 aa).

This sequence belongs to the KptA/TPT1 family.

Removes the 2'-phosphate from RNA via an intermediate in which the phosphate is ADP-ribosylated by NAD followed by a presumed transesterification to release the RNA and generate ADP-ribose 1''-2''-cyclic phosphate (APPR&gt;P). May function as an ADP-ribosylase. This Clostridium perfringens (strain 13 / Type A) protein is Probable RNA 2'-phosphotransferase.